The following is a 202-amino-acid chain: MEAGLLWFCNWSTLGVCAALKLPQIYAQLAARSARGISLPSLLLELAGFLVFLRYQHYYGNPLLTYLEYPILIAQDIVLLLFVFHFNGNVKQALPYMAVFVSSWFILSLQKWIIDLAMNLCTVISAASKFAQLQYLWKVQDSGAVSALTWGLSAYTCATRIITTLMTTNDLTILIRFVIMLALNIWVTATVLHYRKSATKAE.

A signal peptide spans 1–19 (MEAGLLWFCNWSTLGVCAA). 4 helical membrane-spanning segments follow: residues 33 to 53 (SARG…LVFL), 64 to 84 (LTYL…LFVF), 94 to 114 (LPYM…KWII), and 171 to 191 (LTIL…TATV).

Its subcellular location is the membrane. The polypeptide is Solute carrier family 66 member 3 (Slc66a3) (Mus musculus (Mouse)).